Reading from the N-terminus, the 241-residue chain is Demethylmenaquinone methyltransferase (241 aa).

S-adenosyl-L-methionine is bound by residues threonine 60, aspartate 81, and 106–107; that span reads DA.

The protein belongs to the class I-like SAM-binding methyltransferase superfamily. MenG/UbiE family.

The catalysed reaction is a 2-demethylmenaquinol + S-adenosyl-L-methionine = a menaquinol + S-adenosyl-L-homocysteine + H(+). It functions in the pathway quinol/quinone metabolism; menaquinone biosynthesis; menaquinol from 1,4-dihydroxy-2-naphthoate: step 2/2. In terms of biological role, methyltransferase required for the conversion of demethylmenaquinol (DMKH2) to menaquinol (MKH2). This Staphylococcus aureus (strain Mu3 / ATCC 700698) protein is Demethylmenaquinone methyltransferase.